The primary structure comprises 380 residues: MSTKDWAEKDYYKILGVSKDAKPEEIKKAFRKIARDNHPDSHPGDKAAEARFKEASEANDVLSNAKKRKEYDQARSLFGSAGGFRFPRGGAQTSVNVEDFLRTASNGDGFGDLFGNLFGASGGRRTASRSPRRGADVEGETTISFDDAVSGTTVTMDMVSQAPCQACRGTGARAGTVPRVCSTCQGSGMHASSAGGVFEMTEPCPDCHGRGMIVEDPCQVCHGSGRAKSTKSMQTRIPAGVEDGQRIRIKGKGSPGENGGKAGDLYVKVTVRPHEIFGRDGHNLTVTVPVTFPEATLGAEVEVPTLAGTTVRLRIPAGTPNGRTFRVRGRGVPRSDGSRGDLLATVEIAVPESLDDDARHVVERLRDSLPQATPRPWEVK.

One can recognise a J domain in the interval 10-75; that stretch reads DYYKILGVSK…KKRKEYDQAR (66 aa). A compositionally biased stretch (basic and acidic residues) spans 32-56; that stretch reads KIARDNHPDSHPGDKAAEARFKEAS. A disordered region spans residues 32–63; sequence KIARDNHPDSHPGDKAAEARFKEASEANDVLS. The segment at 151–230 adopts a CR-type zinc-finger fold; the sequence is GTTVTMDMVS…CHGSGRAKST (80 aa). Zn(2+) contacts are provided by C164, C167, C181, C184, C204, C207, C218, and C221. CXXCXGXG motif repeat units follow at residues 164 to 171, 181 to 188, 204 to 211, and 218 to 225; these read CQACRGTG, CSTCQGSG, CPDCHGRG, and CQVCHGSG.

The protein belongs to the DnaJ family. In terms of assembly, homodimer. Zn(2+) serves as cofactor.

The protein resides in the cytoplasm. Its function is as follows. Participates actively in the response to hyperosmotic and heat shock by preventing the aggregation of stress-denatured proteins and by disaggregating proteins, also in an autonomous, DnaK-independent fashion. Unfolded proteins bind initially to DnaJ; upon interaction with the DnaJ-bound protein, DnaK hydrolyzes its bound ATP, resulting in the formation of a stable complex. GrpE releases ADP from DnaK; ATP binding to DnaK triggers the release of the substrate protein, thus completing the reaction cycle. Several rounds of ATP-dependent interactions between DnaJ, DnaK and GrpE are required for fully efficient folding. Also involved, together with DnaK and GrpE, in the DNA replication of plasmids through activation of initiation proteins. In Cutibacterium acnes (strain DSM 16379 / KPA171202) (Propionibacterium acnes), this protein is Chaperone protein DnaJ 2.